A 413-amino-acid polypeptide reads, in one-letter code: Probable Xaa-Pro aminopeptidase UREG_07123 (413 aa).

Residues D194, D205, E340, and E379 each coordinate Mn(2+).

Belongs to the peptidase M24B family. Mn(2+) serves as cofactor.

The catalysed reaction is Release of any N-terminal amino acid, including proline, that is linked to proline, even from a dipeptide or tripeptide.. Functionally, catalyzes the removal of a penultimate prolyl residue from the N-termini of peptides. The chain is Probable Xaa-Pro aminopeptidase UREG_07123 from Uncinocarpus reesii (strain UAMH 1704).